The primary structure comprises 87 residues: U3-theraphotoxin-Cg1c (87 aa).

An N-terminal signal peptide occupies residues 1–23 (MRTFTLIAILTCAVLVIFHVSAA). A propeptide spanning residues 24–51 (EELEAQDVIQPEDIFTGVATLEEDRIFE) is cleaved from the precursor. 3 disulfide bridges follow: C52–C65, C56–C79, and C73–C84.

Belongs to the neurotoxin 12 (Hwtx-2) family. 03 (juruin) subfamily. As to expression, expressed by the venom gland.

It is found in the secreted. Probable ion channel inhibitor. The chain is U3-theraphotoxin-Cg1c from Chilobrachys guangxiensis (Chinese earth tiger tarantula).